The sequence spans 247 residues: UPF0280 protein Mevan_0550 (247 aa).

Belongs to the UPF0280 family.

The protein is UPF0280 protein Mevan_0550 of Methanococcus vannielii (strain ATCC 35089 / DSM 1224 / JCM 13029 / OCM 148 / SB).